The following is a 556-amino-acid chain: Glycosyl hydrolase 5 family protein (556 aa).

Positions 1-28 (MTSAGVAPTALRLLTALLLLLVAAPSHS) are cleaved as a signal peptide. N-linked (GlcNAc...) asparagine glycans are attached at residues N102 and N113. E208 (proton donor/acceptor) is an active-site residue. N-linked (GlcNAc...) asparagine glycosylation is found at N212, N290, and N307. Residue E473 is the Nucleophile of the active site. Residues N474 and N479 are each glycosylated (N-linked (GlcNAc...) asparagine).

It belongs to the glycosyl hydrolase 5 (cellulase A) family. Glycosylated.

May have glycosyl hydrolase activity. This Chamaecyparis obtusa (Hinoki false-cypress) protein is Glycosyl hydrolase 5 family protein.